Here is a 117-residue protein sequence, read N- to C-terminus: Photosystem II reaction center Psb28 protein (117 aa).

This sequence belongs to the Psb28 family. Part of the photosystem II complex.

The protein localises to the cellular thylakoid membrane. The polypeptide is Photosystem II reaction center Psb28 protein (Prochlorococcus marinus (strain AS9601)).